The chain runs to 578 residues: Trehalase (578 aa).

Positions 1–19 (MPGSTWELHLLLLLGLGLG) are cleaved as a signal peptide. An N-linked (GlcNAc...) asparagine glycan is attached at Asn78. Substrate contacts are provided by residues Arg168, 175–176 (WD), Asn212, and 221–223 (RSQ). Asn261 carries N-linked (GlcNAc...) asparagine glycosylation. Substrate is bound by residues 286–288 (RPE) and Gly319. The Proton donor/acceptor role is filled by Asp321. An N-linked (GlcNAc...) asparagine glycan is attached at Asn369. Catalysis depends on Glu514, which acts as the Proton donor/acceptor. Glu528 lines the substrate pocket. A lipid anchor (GPI-anchor amidated serine) is attached at Ser555. Residues 556-578 (GTQLALLEPHCLAAALLLSFLTR) constitute a propeptide, removed in mature form.

Belongs to the glycosyl hydrolase 37 family. As to quaternary structure, homodimer; disulfide-linked. As to expression, expressed in small intestine, kidney, and to a lesser extent in liver.

It localises to the cell membrane. The catalysed reaction is alpha,alpha-trehalose + H2O = alpha-D-glucose + beta-D-glucose. Intestinal trehalase is probably involved in the hydrolysis of ingested trehalose. The chain is Trehalase (TREH) from Oryctolagus cuniculus (Rabbit).